We begin with the raw amino-acid sequence, 154 residues long: 3-hydroxyacyl-[acyl-carrier-protein] dehydratase FabZ (154 aa).

His54 is an active-site residue.

Belongs to the thioester dehydratase family. FabZ subfamily.

It localises to the cytoplasm. The enzyme catalyses a (3R)-hydroxyacyl-[ACP] = a (2E)-enoyl-[ACP] + H2O. Functionally, involved in unsaturated fatty acids biosynthesis. Catalyzes the dehydration of short chain beta-hydroxyacyl-ACPs and long chain saturated and unsaturated beta-hydroxyacyl-ACPs. The chain is 3-hydroxyacyl-[acyl-carrier-protein] dehydratase FabZ from Shewanella sp. (strain MR-4).